Consider the following 338-residue polypeptide: Ketoreductase azaE (338 aa).

NADP(+)-binding residues include lysine 41 and tyrosine 166.

The protein belongs to the NAD(P)-dependent epimerase/dehydratase family. Dihydroflavonol-4-reductase subfamily.

It functions in the pathway secondary metabolite biosynthesis. Functionally, ketoreductase; part of the gene cluster that mediates the biosynthesis of azaphilones, a class of fungal metabolites characterized by a highly oxygenated pyrano-quinone bicyclic core and exhibiting a broad range of bioactivities. In the first step, the non-reducing polyketide synthase azaA forms the hexaketide precursor from successive condensations of five malonyl-CoA units, presumably with a simple acetyl-CoA starter unit. The reactive polyketide chain then undergoes a PT-mediated C2-C7 cyclization to afford the aromatic ring and is eventually released as an aldehyde through the R-domain. The putative ketoreductase azaE is proposed to catalyze the reduction of the terminal ketone resulting in the early culture product FK17-P2a. The monooxygenase azaH was demonstrated to be the only enzyme required to convert FK17-P2a to azanigerone E. AzaH first hydroxylates the benzaldehyde intermediate FK17-P2a at C4, which triggers the formation of the pyran-ring to afford azanigerone E. In parallel, the 2,4-dimethylhexanoyl chain is synthesized by the HR-PKS azaB and is proposed to be transferred to the C4-hydroxyl of azanigerone E by the acyltransferase azaD directly from the ACP domain of azaB. Alternatively, the 2,4-dimethyl-hexanoyl chain may be offloaded from the HR-PKS as a carboxylic acid and converted to an acyl-CoA by azaF. The resulting acyl-CoA molecule could then be taken up as a substrate by AzaD to form azanigerone B. To yield the carboxylic acid substituent in azanigerone A, the hydroxypropyl side chain of azanigerone B would need to undergo a C-C oxidative cleavage catalyzed by cytochrome P450 AzaI. AzaI is proposed to act on a vicinal diol that leads to a C-C bond scission either through an alkoxyradical intermediate or a peroxy complex. In the biosynthesis of azanigerone A, azanigerone B first undergoes hydroxylation at C10, possibly catalyzed by one of the two FAD-dependent monooxygenases encoded in the cluster, azaG or azaL, resulting in the vicinal diol azanigerone C. Oxidative cleavage of azanigerone C by azaI would yield the corresponding aldehyde derivative of azanigerone A. Finally, the dehydrogenase azaJ is proposed to convert the aldehyde functional group into the carboxylic acid, completing the conversion from azanigerone B to azanigerone A. Alternatively, the oxidation of aldehyde to carboxylic acid may be catalyzed by the same P450 enzyme azaI via consecutive oxidation or by endogenous alcohol dehydrogenase. This Aspergillus niger (strain ATCC 1015 / CBS 113.46 / FGSC A1144 / LSHB Ac4 / NCTC 3858a / NRRL 328 / USDA 3528.7) protein is Ketoreductase azaE.